A 782-amino-acid polypeptide reads, in one-letter code: General transcription and DNA repair factor IIH helicase/translocase subunit XPB (782 aa).

A compositionally biased stretch (basic and acidic residues) spans 1-11 (MGKRDRVDRDK). Positions 1–52 (MGKRDRVDRDKKKSKKRQYEEEEEDEDDAPGNESQEAVPSAAGKQVDESSTK) are disordered. The short motif at 6–18 (RVDRDKKKSKKRQ) is the Nuclear localization signal element. Residues 20–30 (EEEEEDEDDAP) show a composition bias toward acidic residues. A Phosphoserine modification is found at S34. The 162-residue stretch at 328–489 (FGNGRARSGV…LNFLIGPKLY (162 aa)) folds into the Helicase ATP-binding domain. 341-348 (PCGAGKSL) is a binding site for ATP. Residues 442 to 445 (EVHT) carry the DEVH box motif. Residues 543–703 (ACQFLIKFHE…AGMEEEELAF (161 aa)) enclose the Helicase C-terminal domain. Position 686 is a phosphoserine (S686). S751 bears the Phosphoserine; by CK2 mark.

This sequence belongs to the helicase family. RAD25/XPB subfamily. Component of the 7-subunit TFIIH core complex composed of XPB/ERCC3, XPD/ERCC2, GTF2H1, GTF2H2, GTF2H3, GTF2H4 and GTF2H5, which is active in NER. The core complex associates with the 3-subunit CDK-activating kinase (CAK) module composed of CCNH/cyclin H, CDK7 and MNAT1 to form the 10-subunit holoenzyme (holo-TFIIH) active in transcription. Interacts with PUF60. Interacts with ATF7IP. Interacts with KAT2A; leading to KAT2A recruitment to promoters and acetylation of histones. Part of TBP-based Pol II pre-initiation complex (PIC), in which Pol II core assembles with general transcription factors and other specific initiation factors including GTF2E1, GTF2E2, GTF2F1, GTF2F2, TCEA1, ERCC2, ERCC3, GTF2H2, GTF2H3, GTF2H4, GTF2H5, GTF2A1, GTF2A2, GTF2B and TBP; this large multi-subunit PIC complex mediates DNA unwinding and targets Pol II core to the transcription start site where the first phosphodiester bond forms. In terms of processing, phosphorylation on Ser-751 by CK2 controls the 5'-excision activity of ERCC1-XPF endonuclease; phosphorylated protein inhibits the excision activity and thus NER. Dephosphorylation reactivates the 5'-excision step. Phosphorylation has no effect on transcription or the 3'-5' helicase activity.

It localises to the nucleus. It catalyses the reaction Couples ATP hydrolysis with the unwinding of duplex DNA by translocating in the 3'-5' direction.. It carries out the reaction ATP + H2O = ADP + phosphate + H(+). Its activity is regulated as follows. Phosphorylation on Ser-751 by CK2 controls the 5'-excision activity of ERCC1-XPF endonuclease; phosphorylated protein inhibits the excision activity and thus NER. ATPase activity is stimulated by TFIIH subunit p52 (GTF2H4). DNA translocase activity by this subunit in TFIIH is stimulated by XPA, ERCC5/XPG and XFP plus ERCC1. Its function is as follows. ATP-dependent 3'-5' DNA helicase/translocase; binds dsDNA rather than ssDNA, unzipping it in a translocase rather than classical helicase activity. Component of the general transcription and DNA repair factor IIH (TFIIH) core complex. When complexed to CDK-activating kinase (CAK), involved in RNA transcription by RNA polymerase II. The ATPase activity of XPB/ERCC3, but not its helicase activity, is required for DNA opening; it may wrap around the damaged DNA wedging it open, causing localized melting and twisting that allows XPD/ERCC2 helicase to anchor. The ATP-dependent helicase activity of XPB/ERCC3 may be required for promoter escape. Also involved in transcription-coupled nucleotide excision repair (NER) of damaged DNA. In NER, TFIIH acts by opening DNA around the lesion to allow the excision of the damaged oligonucleotide and its replacement by a new DNA fragment. The structure of the TFIIH transcription complex differs from the NER-TFIIH complex; large movements by XPD/ERCC2 and XPB/ERCC3 are stabilized by XPA. In Rattus norvegicus (Rat), this protein is General transcription and DNA repair factor IIH helicase/translocase subunit XPB (Ercc3).